The following is a 261-amino-acid chain: ClpXP adapter protein SpxH (261 aa).

Belongs to the SpxH family. In terms of assembly, interacts with Spx.

It localises to the cytoplasm. In terms of biological role, adapter protein required for efficient degradation of Spx by ClpXP under non-stress conditions. Interaction with Spx stabilizes Spx and exposes the C-terminus of Spx for recognition and proteolysis by ClpXP. This is ClpXP adapter protein SpxH from Staphylococcus aureus.